A 342-amino-acid chain; its full sequence is tRNA N6-adenosine threonylcarbamoyltransferase (342 aa).

2 residues coordinate Fe cation: His111 and His115. Residues Leu134–Gly138, Asp167, Gly180, and Asn277 each bind substrate. Fe cation is bound at residue Asp305.

This sequence belongs to the KAE1 / TsaD family. It depends on Fe(2+) as a cofactor.

The protein localises to the cytoplasm. It carries out the reaction L-threonylcarbamoyladenylate + adenosine(37) in tRNA = N(6)-L-threonylcarbamoyladenosine(37) in tRNA + AMP + H(+). Functionally, required for the formation of a threonylcarbamoyl group on adenosine at position 37 (t(6)A37) in tRNAs that read codons beginning with adenine. Is involved in the transfer of the threonylcarbamoyl moiety of threonylcarbamoyl-AMP (TC-AMP) to the N6 group of A37, together with TsaE and TsaB. TsaD likely plays a direct catalytic role in this reaction. This Haemophilus influenzae (strain ATCC 51907 / DSM 11121 / KW20 / Rd) protein is tRNA N6-adenosine threonylcarbamoyltransferase.